A 475-amino-acid polypeptide reads, in one-letter code: F-box/kelch-repeat protein At1g22040 (475 aa).

Positions 1–28 are disordered; the sequence is MGSVMSLSCSKRKATSQDVECSSESRKR. One can recognise an F-box domain in the interval 41-87; that stretch reads CRLIPSLPDELSIQILARLPRICYSSVRLVSRRWRSAVSTSEVYSLR. Kelch repeat units follow at residues 94 to 140, 182 to 228, 229 to 279, 306 to 350, and 352 to 401; these read EEWL…KSLS, GLYV…VLNK, KLYV…AFLA, PFFV…VDGE, and YAFD…GFHG.

The sequence is that of F-box/kelch-repeat protein At1g22040 from Arabidopsis thaliana (Mouse-ear cress).